The primary structure comprises 291 residues: Cell division protein FtsX (291 aa).

Residues methionine 1 to phenylalanine 18 are Cytoplasmic-facing. Residues serine 19–isoleucine 39 form a helical membrane-spanning segment. The Periplasmic segment spans residues asparagine 40–lysine 162. A helical transmembrane segment spans residues valine 163–asparagine 183. Residues serine 184 to lysine 220 lie on the Cytoplasmic side of the membrane. The helical transmembrane segment at leucine 221–glutamate 241 threads the bilayer. Residues threonine 242–lysine 253 are Periplasmic-facing. The chain crosses the membrane as a helical span at residues alanine 254 to serine 274. Topologically, residues threonine 275–tyrosine 291 are cytoplasmic.

It belongs to the ABC-4 integral membrane protein family. FtsX subfamily.

The protein resides in the cell inner membrane. Functionally, required for cell division and gliding motility. This Flavobacterium johnsoniae (strain ATCC 17061 / DSM 2064 / JCM 8514 / BCRC 14874 / CCUG 350202 / NBRC 14942 / NCIMB 11054 / UW101) (Cytophaga johnsonae) protein is Cell division protein FtsX.